The primary structure comprises 151 residues: D-aminoacyl-tRNA deacylase (151 aa).

Residues 138-139 carry the Gly-cisPro motif, important for rejection of L-amino acids motif; the sequence is GP.

This sequence belongs to the DTD family. Homodimer.

It is found in the cytoplasm. It carries out the reaction glycyl-tRNA(Ala) + H2O = tRNA(Ala) + glycine + H(+). It catalyses the reaction a D-aminoacyl-tRNA + H2O = a tRNA + a D-alpha-amino acid + H(+). An aminoacyl-tRNA editing enzyme that deacylates mischarged D-aminoacyl-tRNAs. Also deacylates mischarged glycyl-tRNA(Ala), protecting cells against glycine mischarging by AlaRS. Acts via tRNA-based rather than protein-based catalysis; rejects L-amino acids rather than detecting D-amino acids in the active site. By recycling D-aminoacyl-tRNA to D-amino acids and free tRNA molecules, this enzyme counteracts the toxicity associated with the formation of D-aminoacyl-tRNA entities in vivo and helps enforce protein L-homochirality. The protein is D-aminoacyl-tRNA deacylase of Picosynechococcus sp. (strain ATCC 27264 / PCC 7002 / PR-6) (Agmenellum quadruplicatum).